We begin with the raw amino-acid sequence, 541 residues long: MRMSDGAAPKANGSEASGQDLVPAAVEQAVPIQPVAGAALAAPAAGQINQIDPWIFQNFVQCPLGEFSISPRNTPGEILFDLALGPGLNPYLAHLSAMYTGWVGNMEVQLVLAGNAFTAGKVVVALVPPYFPKGSLTTAQITCFPHVMCDVRTLEPIQLPLLDVRRVLWHATQDQEESMRLVCMLYTPLRTNSPGDESFVVSGRLLSKPAADFNFVYLTPPIERTIYRMVDLPVIQPRLCTHARWPAPVYGLLVDPSLPSNPQWQNGRVHVDGTLLGTTPISGSWVSCFAAEAAYKFQSGTGEVATFTLIEQDGSAYVPGDRAAPLGYPDFSGQLEIEVQTETTKTGDKLKVTTFEMILGPTTNADQAPYQGRVFASVTAAASLDLVDGRVRAVPRSIYGFQDTIPEYNDGLLVPLAPPIGPFLPGEVLLRFRTYMRQIDTADAAAEAIDCALPQEFVSWFASNAFTVQSEALLLRYRNTLTGQLLFECKLYNEGYIALSYSGSGPLTFPTDGIFEVVSWVPRLYQLASVGSLATGRMLKQ.

Residues 1–224 (MRMSDGAAPK…FVYLTPPIER (224 aa)) form a shell domain region. A P1 sub-domain 1 region spans residues 225-277 (TIYRMVDLPVIQPRLCTHARWPAPVYGLLVDPSLPSNPQWQNGRVHVDGTLLG). Residues 225–541 (TIYRMVDLPV…SLATGRMLKQ (317 aa)) form a protruding domain region. Residues 278–416 (TTPISGSWVS…EYNDGLLVPL (139 aa)) are P2 sub-domain. An interaction with host receptor CD300LF region spans residues 298–366 (QSGTGEVATF…MILGPTTNAD (69 aa)). The segment at 417–541 (APPIGPFLPG…SLATGRMLKQ (125 aa)) is P1 sub-domain 2.

Belongs to the caliciviridae capsid protein family. As to quaternary structure, homodimer. Homomultimer. Interacts with the minor capsid protein VP2. Interacts (via P2 subdomain) with host receptor CD300LF (via N-terminus); this interaction requires Mg(2+) and Ca(2+), and allows viral binding and entry into the host cell. Stochioimetry is 2:2. Bile acids interact with the P domain dimer interface and act as cofactors enhancing virus binding and infectivity. Interacts with host receptor CD300LD; this interaction allows viral binding and entry into the host cell.

The protein resides in the virion. It localises to the host cytoplasm. Functionally, capsid protein self assembles to form an icosahedral capsid with a T=3 symmetry, about 38 nm in diameter, and consisting of 180 capsid proteins. A smaller form of capsid with a diameter of 23 nm might be capsid proteins assembled as icosahedron with T=1 symmetry. The capsid encapsulates the genomic RNA and is decorated with VP2 proteins. Mediates virion attachment to the host cell receptor CD300LF. The chain is Capsid protein VP1 from Norovirus (isolate Mouse/NoV/United States/MNV1/2002/GV) (MNV-1).